The chain runs to 432 residues: UPF0597 protein APJL_1638 (432 aa).

This sequence belongs to the UPF0597 family.

This chain is UPF0597 protein APJL_1638, found in Actinobacillus pleuropneumoniae serotype 3 (strain JL03).